The sequence spans 110 residues: Quaternary ammonium compound-resistance protein QacE (110 aa).

4 helical membrane-spanning segments follow: residues 1–21, 30–50, 58–78, and 85–105; these read MKGWLFLVIAIVGEVIATSAL, LAPSAVVIIGYGIAFYFLSLV, VAYAVWSGLGVVIITAIAWLL, and AWGFVGMGLIVSGVVVLNLLS.

The protein belongs to the drug/metabolite transporter (DMT) superfamily. Small multidrug resistance (SMR) (TC 2.A.7.1) family.

The protein localises to the cell membrane. Multidrug exporter. Is implicated for the resistance to bacteriocidal quaternary ammonium compounds. The protein is Quaternary ammonium compound-resistance protein QacE (qacE) of Escherichia coli.